Here is a 239-residue protein sequence, read N- to C-terminus: Mannose-binding protein A (239 aa).

The signal sequence occupies residues methionine 1–serine 18. The disordered stretch occupies residues alanine 35–aspartate 88. One can recognise a Collagen-like domain in the interval glycine 37–asparagine 89. Residues arginine 38 to glutamate 50 show a composition bias toward basic and acidic residues. Proline 44 carries the 4-hydroxyproline modification. A 5-hydroxylysine mark is found at lysine 45 and lysine 48. Lysine 45 and lysine 48 each carry an O-linked (Gal...) hydroxylysine glycan. Proline 51, proline 62, proline 68, proline 74, and proline 79 each carry 4-hydroxyproline. Over residues leucine 58–proline 74 the composition is skewed to low complexity. Lysine 80 and lysine 83 each carry 5-hydroxylysine. Residues lysine 80 and lysine 83 are each glycosylated (O-linked (Gal...) hydroxylysine). The C-type lectin domain occupies serine 144–alanine 239. 2 disulfides stabilise this stretch: cysteine 146-cysteine 235 and cysteine 213-cysteine 227. Residues aspartate 179, glutamate 183, glutamate 203, asparagine 205, glutamate 211, aspartate 212, asparagine 223, and aspartate 224 each contribute to the Ca(2+) site. The interval glutamate 203–glutamate 211 is calcium-dependent carbohydrate binding.

Homotrimer. Forms higher oligomeric complexes formed by the association of two, three or more homotrimers. Oligomerization occurs in the endoplasmic reticulum. Interacts with MASP1 and MASP2. Hydroxylated on lysine and proline residues within the collagen-like domain. In terms of processing, O-glycosylated. O-linked glycans on hydroxylysine residues consist of Glc-Gal disaccharides bound to the oxygen atom of post-translationally added hydroxyl groups. As to expression, detected in liver and blood serum (at protein level). Detected in liver.

The protein localises to the secreted. Its function is as follows. Calcium-dependent lectin. Plays a role in the innate immune response by binding mannose, fucose and N-acetylglucosamine moieties on different microorganisms and mediating activation of the lectin complement pathway. Binds to late apoptotic cells, as well as to apoptotic blebs and to necrotic cells, but not to early apoptotic cells, facilitating their uptake by macrophages. This Mus musculus (Mouse) protein is Mannose-binding protein A (Mbl1).